The chain runs to 399 residues: Argininosuccinate synthase (399 aa).

Residues 8 to 16 (AYSGGLDTS) and alanine 35 each bind ATP. Tyrosine 87 contacts L-citrulline. Glycine 117 contributes to the ATP binding site. Threonine 119, asparagine 123, and aspartate 124 together coordinate L-aspartate. L-citrulline is bound at residue asparagine 123. L-citrulline contacts are provided by arginine 127, serine 176, serine 185, glutamate 261, and tyrosine 273.

This sequence belongs to the argininosuccinate synthase family. Type 1 subfamily. As to quaternary structure, homotetramer.

Its subcellular location is the cytoplasm. It carries out the reaction L-citrulline + L-aspartate + ATP = 2-(N(omega)-L-arginino)succinate + AMP + diphosphate + H(+). It functions in the pathway amino-acid biosynthesis; L-arginine biosynthesis; L-arginine from L-ornithine and carbamoyl phosphate: step 2/3. The polypeptide is Argininosuccinate synthase (Buchnera aphidicola subsp. Cinara cedri (strain Cc)).